A 305-amino-acid polypeptide reads, in one-letter code: Cytochrome c biogenesis protein CcsA (305 aa).

The next 8 helical transmembrane spans lie at 11–31 (GLGF…FWAV), 37–57 (TGIV…QLVL), 63–83 (GHFP…ACTL), 96–116 (IVAA…SFAL), 141–161 (VIMV…AVLL), 212–232 (TITV…VWAN), 246–263 (TWAL…HTRL), and 275–295 (VAVV…LLGI).

It belongs to the CcmF/CycK/Ccl1/NrfE/CcsA family. In terms of assembly, may interact with ccs1.

It localises to the cellular thylakoid membrane. Functionally, required during biogenesis of c-type cytochromes (cytochrome c6 and cytochrome f) at the step of heme attachment. The protein is Cytochrome c biogenesis protein CcsA of Parasynechococcus marenigrum (strain WH8102).